Reading from the N-terminus, the 311-residue chain is MNNGTSPAGGETEATQTRSGFVALIGAPNAGKSTLVNQLVGTKVSIVTHKVQTTRALVRGIFIEGPAQIVLVDTPGIFRPKRRLDRAMVTTAWGGAKDADIILVIIDAQGGFNENAEALLESMKDVRQKKVLVLNKVDRVDPPVLLSLAQKANELVPFDRTFMISALNGSGCKDLAKYLAESVPNGPWYYPEDQISDIPMRQLAAEITREKLYLRLHEELPYASTVETERWEERKDGSVRIEQVIYVERESQKKIVLGHKGETVKAIGQAARKEISEILEQTVHLFLFVKVRENWGNDPERYREMGLDFPT.

The Era-type G domain maps to 18 to 185 (RSGFVALIGA…AKYLAESVPN (168 aa)). The segment at 26–33 (GAPNAGKS) is G1. 26–33 (GAPNAGKS) lines the GTP pocket. Residues 52 to 56 (QTTRA) are G2. The tract at residues 73-76 (DTPG) is G3. GTP-binding positions include 73-77 (DTPGI) and 135-138 (NKVD). Residues 135–138 (NKVD) form a G4 region. The G5 stretch occupies residues 164-166 (ISA). A KH type-2 domain is found at 216-293 (LHEELPYAST…HLFLFVKVRE (78 aa)).

This sequence belongs to the TRAFAC class TrmE-Era-EngA-EngB-Septin-like GTPase superfamily. Era GTPase family. In terms of assembly, monomer.

Its subcellular location is the cytoplasm. It is found in the cell inner membrane. Its function is as follows. An essential GTPase that binds both GDP and GTP, with rapid nucleotide exchange. Plays a role in 16S rRNA processing and 30S ribosomal subunit biogenesis and possibly also in cell cycle regulation and energy metabolism. The sequence is that of GTPase Era from Brucella suis biovar 1 (strain 1330).